The chain runs to 635 residues: Threonine--tRNA ligase (635 aa).

Positions 1-61 (MINISFPDGS…EHDCKLRILT (61 aa)) constitute a TGS domain. The interval 242–533 (DHRKIGKELD…LIEEYAGKFP (292 aa)) is catalytic. Positions 333, 384, and 510 each coordinate Zn(2+).

This sequence belongs to the class-II aminoacyl-tRNA synthetase family. Homodimer. The cofactor is Zn(2+).

It is found in the cytoplasm. It carries out the reaction tRNA(Thr) + L-threonine + ATP = L-threonyl-tRNA(Thr) + AMP + diphosphate + H(+). Its function is as follows. Catalyzes the attachment of threonine to tRNA(Thr) in a two-step reaction: L-threonine is first activated by ATP to form Thr-AMP and then transferred to the acceptor end of tRNA(Thr). Also edits incorrectly charged L-seryl-tRNA(Thr). This Rickettsia typhi (strain ATCC VR-144 / Wilmington) protein is Threonine--tRNA ligase.